We begin with the raw amino-acid sequence, 417 residues long: Serine hydroxymethyltransferase (417 aa).

(6S)-5,6,7,8-tetrahydrofolate is bound by residues Leu121 and 125-127; that span reads GHL. Position 229 is an N6-(pyridoxal phosphate)lysine (Lys229). 355-357 provides a ligand contact to (6S)-5,6,7,8-tetrahydrofolate; the sequence is SPF.

It belongs to the SHMT family. Homodimer. Requires pyridoxal 5'-phosphate as cofactor.

Its subcellular location is the cytoplasm. It catalyses the reaction (6R)-5,10-methylene-5,6,7,8-tetrahydrofolate + glycine + H2O = (6S)-5,6,7,8-tetrahydrofolate + L-serine. The protein operates within one-carbon metabolism; tetrahydrofolate interconversion. Its pathway is amino-acid biosynthesis; glycine biosynthesis; glycine from L-serine: step 1/1. Catalyzes the reversible interconversion of serine and glycine with tetrahydrofolate (THF) serving as the one-carbon carrier. This reaction serves as the major source of one-carbon groups required for the biosynthesis of purines, thymidylate, methionine, and other important biomolecules. Also exhibits THF-independent aldolase activity toward beta-hydroxyamino acids, producing glycine and aldehydes, via a retro-aldol mechanism. This chain is Serine hydroxymethyltransferase, found in Xylella fastidiosa (strain M23).